Consider the following 198-residue polypeptide: MPKIGMEPLRRRELIDAAIRTIGQRGSLDVTVAQIAHEAGVSPALAHHYFGGKDKLILATMRHLLRELGRDLNAAIKQANTPHERIAAIIAVNFSATQFAQETIAAWLTFYVHAQQSDDIKRLLRIYARRLHSNLVFALEQLTSRARANRIAEGAGAMIDGLYIRHALGADAPDAASAIALVEDYIAIQLSGQPSAEN.

An HTH tetR-type domain is found at 8–68 (PLRRRELIDA…ATMRHLLREL (61 aa)). Positions 31 to 50 (TVAQIAHEAGVSPALAHHYF) form a DNA-binding region, H-T-H motif.

It functions in the pathway amine and polyamine biosynthesis; betaine biosynthesis via choline pathway [regulation]. Functionally, repressor involved in the biosynthesis of the osmoprotectant glycine betaine. It represses transcription of the choline transporter BetT and the genes of BetAB involved in the synthesis of glycine betaine. The protein is HTH-type transcriptional regulator BetI of Brucella melitensis biotype 2 (strain ATCC 23457).